Here is a 464-residue protein sequence, read N- to C-terminus: Argininosuccinate lyase (464 aa).

Belongs to the lyase 1 family. Argininosuccinate lyase subfamily.

The protein localises to the cytoplasm. The catalysed reaction is 2-(N(omega)-L-arginino)succinate = fumarate + L-arginine. It functions in the pathway amino-acid biosynthesis; L-arginine biosynthesis; L-arginine from L-ornithine and carbamoyl phosphate: step 3/3. The sequence is that of Argininosuccinate lyase from Janthinobacterium sp. (strain Marseille) (Minibacterium massiliensis).